The following is a 171-amino-acid chain: uncharacterized protein (171 aa).

The first 24 residues, 1-24, serve as a signal peptide directing secretion; sequence MIFDSLTMTQSSLSLLLLTGAIFS. Over 25-70 the chain is Extracellular; that stretch reads ISALYLTLFHRCATFSATSDLFLLVPLKFVSRDINDRLKTHYHHSC. Residues 71–91 traverse the membrane as a helical segment; sequence LGSPFLCIIFLFISPLLNYHF. Residues 92-140 lie on the Cytoplasmic side of the membrane; the sequence is RSLVRPPKIHQKGSIPTLTKNAETRCSHHLKQAAATGEVCKVVVIIKGH. The helical transmembrane segment at 141–161 threads the bilayer; it reads ILKDCSIFFFIIFPLIYPLFI. Topologically, residues 162–171 are extracellular; it reads NCSSKYNGLQ.

It localises to the membrane. This is an uncharacterized protein from Saccharomyces cerevisiae (strain ATCC 204508 / S288c) (Baker's yeast).